The following is a 252-amino-acid chain: Enolase-phosphatase E1 (252 aa).

Residues Asp14 and Glu16 each coordinate Mg(2+). Residues 142–143 (SS) and Lys176 contribute to the substrate site. Position 201 (Asp201) interacts with Mg(2+).

This sequence belongs to the HAD-like hydrolase superfamily. MasA/MtnC family. As to quaternary structure, monomer. It depends on Mg(2+) as a cofactor.

Its subcellular location is the cytoplasm. It localises to the nucleus. It catalyses the reaction 5-methylsulfanyl-2,3-dioxopentyl phosphate + H2O = 1,2-dihydroxy-5-(methylsulfanyl)pent-1-en-3-one + phosphate. It participates in amino-acid biosynthesis; L-methionine biosynthesis via salvage pathway; L-methionine from S-methyl-5-thio-alpha-D-ribose 1-phosphate: step 3/6. It functions in the pathway amino-acid biosynthesis; L-methionine biosynthesis via salvage pathway; L-methionine from S-methyl-5-thio-alpha-D-ribose 1-phosphate: step 4/6. Its function is as follows. Bifunctional enzyme that catalyzes the enolization of 2,3-diketo-5-methylthiopentyl-1-phosphate (DK-MTP-1-P) into the intermediate 2-hydroxy-3-keto-5-methylthiopentenyl-1-phosphate (HK-MTPenyl-1-P), which is then dephosphorylated to form the acireductone 1,2-dihydroxy-3-keto-5-methylthiopentene (DHK-MTPene). The polypeptide is Enolase-phosphatase E1 (Drosophila ananassae (Fruit fly)).